The primary structure comprises 300 residues: Ribosomal RNA small subunit methyltransferase H (300 aa).

S-adenosyl-L-methionine contacts are provided by residues 43 to 45 (AGH), aspartate 60, aspartate 105, and glutamine 112.

It belongs to the methyltransferase superfamily. RsmH family.

It localises to the cytoplasm. The catalysed reaction is cytidine(1402) in 16S rRNA + S-adenosyl-L-methionine = N(4)-methylcytidine(1402) in 16S rRNA + S-adenosyl-L-homocysteine + H(+). Functionally, specifically methylates the N4 position of cytidine in position 1402 (C1402) of 16S rRNA. The chain is Ribosomal RNA small subunit methyltransferase H from Deinococcus deserti (strain DSM 17065 / CIP 109153 / LMG 22923 / VCD115).